The following is a 188-amino-acid chain: GMP synthase [glutamine-hydrolyzing] subunit A (188 aa).

Positions 1-188 (MIIIMDNGGQ…RNFAKICGEL (188 aa)) constitute a Glutamine amidotransferase type-1 domain. Cys78 serves as the catalytic Nucleophile. Residues His165 and Glu167 contribute to the active site.

In terms of assembly, heterodimer composed of a glutamine amidotransferase subunit (A) and a GMP-binding subunit (B).

It catalyses the reaction XMP + L-glutamine + ATP + H2O = GMP + L-glutamate + AMP + diphosphate + 2 H(+). It functions in the pathway purine metabolism; GMP biosynthesis; GMP from XMP (L-Gln route): step 1/1. Functionally, catalyzes the synthesis of GMP from XMP. This is GMP synthase [glutamine-hydrolyzing] subunit A from Pyrococcus furiosus (strain ATCC 43587 / DSM 3638 / JCM 8422 / Vc1).